A 411-amino-acid polypeptide reads, in one-letter code: Calmodulin-binding receptor-like cytoplasmic kinase 2 (411 aa).

Disordered stretches follow at residues 1 to 44 (MPSR…DTTT) and 66 to 99 (SNYI…YGNA). Low complexity-rich tracts occupy residues 16–44 (TTSS…DTTT) and 66–95 (SNYI…VQRS). The residue at position 108 (Thr108) is a Phosphothreonine. In terms of domain architecture, Protein kinase spans 119-398 (FSPSFRIGQG…MKKCSEILWG (280 aa)). Residues 125-133 (IGQGGFGTV) and Lys147 contribute to the ATP site. Positions 134 to 159 (YKVKLRDGKTFAVKRAKKSMHDDRQG) are caM-binding. The active-site Proton acceptor is Asp247. Residues Ser251 and Ser283 each carry the phosphoserine modification. Phosphothreonine occurs at positions 284 and 289. Tyr297 bears the Phosphotyrosine mark.

Belongs to the protein kinase superfamily. Ser/Thr protein kinase family. Interacts with calmodulin (CaM) in a Ca(2+)-dependent manner.

The protein localises to the cytoplasm. The catalysed reaction is L-seryl-[protein] + ATP = O-phospho-L-seryl-[protein] + ADP + H(+). It carries out the reaction L-threonyl-[protein] + ATP = O-phospho-L-threonyl-[protein] + ADP + H(+). In Arabidopsis thaliana (Mouse-ear cress), this protein is Calmodulin-binding receptor-like cytoplasmic kinase 2 (CRCK2).